Reading from the N-terminus, the 434-residue chain is KH domain-containing protein 3 (434 aa).

The interval 1–39 (MATLKTFRTLVQLKHKLGKAYEIVGEPRLPKWFHVEYLE) is involved in RNA binding. The region spanning 40 to 118 (DPKKMYVEPT…CRMKLMEKEA (79 aa)) is the KH; atypical domain. A phosphothreonine mark is found at T267 and T279. Positions 334-434 (VREAATQQTP…RAVWEPFVML (101 aa)) are required for interaction with NUMA1 and regulation of apoptosis in response to DNA damage.

It belongs to the KHDC1 family. Component of the subcortical maternal complex (SCMC), at least composed of NLRP5, KHDC3, OOEP, and TLE6. Within the complex, interacts with NLRP5, KHDC3 and TLE6. The SCMC may facilitate translocation of its components between the nuclear and cytoplasmic compartments. Forms a scaffold complex with OOEP/FLOPED, and interacts with BLM and TRIM25 at DNA replication forks. Interacts with PARP1; the interaction is increased following the formation of DNA double-strand breaks. Interacts (via C-terminus) with NUMA1.

It is found in the cytoplasm. The protein localises to the cell cortex. Its subcellular location is the nucleus. The protein resides in the mitochondrion. It localises to the cytoskeleton. It is found in the microtubule organizing center. The protein localises to the centrosome. Its subcellular location is the chromosome. Its function is as follows. Component of the subcortical maternal complex (SCMC), a multiprotein complex that plays a key role in early embryonic development. The SCMC complex is a structural constituent of cytoplasmic lattices, which consist in fibrous structures found in the cytoplasm of oocytes and preimplantation embryos. They are required to store maternal proteins critical for embryonic development, such as proteins that control epigenetic reprogramming of the preimplantation embryo, and prevent their degradation or activation. KHDC3 ensures proper spindle assembly by regulating the localization of AURKA via RHOA signaling and of PLK1 via a RHOA-independent process. Required for the localization of MAD2L1 to kinetochores to enable spindle assembly checkpoint function. As part of the OOEP-KHDC3 scaffold, recruits BLM and TRIM25 to DNA replication forks, thereby promoting the ubiquitination of BLM by TRIM25, enhancing BLM retainment at replication forks and therefore promoting stalled replication fork restart. Regulates homologous recombination-mediated DNA repair via recruitment of RAD51 to sites of DNA double-strand breaks, and sustainment of PARP1 activity, which in turn modulates downstream ATM or ATR activation. Activation of ATM or ATR in response to DNA double-strand breaks may be cell-type specific. Its role in DNA double-strand break repair is independent of its role in restarting stalled replication forks. Promotes neural stem cell neurogenesis and neuronal differentiation in the hippocampus. May regulate normal development of learning, memory and anxiety. Capable of binding RNA. The polypeptide is KH domain-containing protein 3 (Rattus norvegicus (Rat)).